We begin with the raw amino-acid sequence, 361 residues long: S-adenosylmethionine decarboxylase proenzyme (361 aa).

Residues Glu-13 and Glu-16 contribute to the active site. Ser-73 acts as the Schiff-base intermediate with substrate; via pyruvic acid in catalysis. A Pyruvic acid (Ser); by autocatalysis modification is found at Ser-73. The Proton donor; for catalytic activity role is filled by Cys-87. Catalysis depends on proton acceptor; for processing activity residues Ser-236 and His-249.

The protein belongs to the eukaryotic AdoMetDC family. Requires pyruvate as cofactor. Is synthesized initially as an inactive proenzyme. Formation of the active enzyme involves a self-maturation process in which the active site pyruvoyl group is generated from an internal serine residue via an autocatalytic post-translational modification. Two non-identical subunits are generated from the proenzyme in this reaction, and the pyruvate is formed at the N-terminus of the alpha chain, which is derived from the carboxyl end of the proenzyme. The post-translation cleavage follows an unusual pathway, termed non-hydrolytic serinolysis, in which the side chain hydroxyl group of the serine supplies its oxygen atom to form the C-terminus of the beta chain, while the remainder of the serine residue undergoes an oxidative deamination to produce ammonia and the pyruvoyl group blocking the N-terminus of the alpha chain.

It carries out the reaction S-adenosyl-L-methionine + H(+) = S-adenosyl 3-(methylsulfanyl)propylamine + CO2. It functions in the pathway amine and polyamine biosynthesis; S-adenosylmethioninamine biosynthesis; S-adenosylmethioninamine from S-adenosyl-L-methionine: step 1/1. In Nicotiana sylvestris (Wood tobacco), this protein is S-adenosylmethionine decarboxylase proenzyme (SAMDC1).